A 1436-amino-acid polypeptide reads, in one-letter code: Probable ATP-dependent RNA helicase spindle-E (1436 aa).

Residues 124–291 form the Helicase ATP-binding domain; it reads LAAINANPVV…FTTTNSIPPV (168 aa). 137–144 serves as a coordination point for ATP; the sequence is GETGCGKT. Residues 237–240 carry the DEAH box motif; the sequence is DEVH. Residues 337–524 form the Helicase C-terminal domain; the sequence is KIIMVIDNME…NSVLRAKELE (188 aa). In terms of domain architecture, Tudor spans 940 to 1003; that stretch reads ACDISKGMMV…RFMSEELIQQ (64 aa).

This sequence belongs to the DEAD box helicase family. DEAH subfamily.

The protein localises to the cytoplasm. It catalyses the reaction ATP + H2O = ADP + phosphate + H(+). In terms of biological role, probable ATP-binding RNA helicase which plays a central role during spermatogenesis and oogenesis by repressing transposable elements and preventing their mobilization, which is essential for the germline integrity. Acts via the piRNA metabolic process, which mediates the repression of transposable elements during meiosis by forming complexes composed of piRNAs and Piwi and govern the methylation and subsequent repression of transposons. Involved in the repression of LTR retrotransposon copia. Also involved in telomere regulation by repressing specialized telomeric retroelements HeT-A, TAHRE, and TART; Drosophila telomeres being maintained by transposition of specialized telomeric retroelements. Involved in telomeric trans-silencing, a repression mechanism by which a transposon or a transgene inserted in subtelomeric heterochromatin has the capacity to repress in trans in the female germline, a homologous transposon, or transgene located in euchromatin. Involved in the repression of testis-expressed Stellate genes by the homologous Su(Ste) repeats. Required for anteroposterior and dorsoventral axis formation during oogenesis. This Drosophila yakuba (Fruit fly) protein is Probable ATP-dependent RNA helicase spindle-E (spn-E).